The chain runs to 224 residues: 7-cyano-7-deazaguanine synthase (224 aa).

ATP is bound at residue 10–20 (LSGGLDSATVV). Positions 189, 199, 202, and 205 each coordinate Zn(2+).

It belongs to the QueC family. Requires Zn(2+) as cofactor.

The catalysed reaction is 7-carboxy-7-deazaguanine + NH4(+) + ATP = 7-cyano-7-deazaguanine + ADP + phosphate + H2O + H(+). The protein operates within purine metabolism; 7-cyano-7-deazaguanine biosynthesis. Its function is as follows. Catalyzes the ATP-dependent conversion of 7-carboxy-7-deazaguanine (CDG) to 7-cyano-7-deazaguanine (preQ(0)). In Pseudomonas putida (strain ATCC 47054 / DSM 6125 / CFBP 8728 / NCIMB 11950 / KT2440), this protein is 7-cyano-7-deazaguanine synthase.